A 749-amino-acid polypeptide reads, in one-letter code: Phosphate-regulating neutral endopeptidase PHEX (749 aa).

Residues 1-20 (MEAETGSSVETGKKANRGTR) are Cytoplasmic-facing. The chain crosses the membrane as a helical; Signal-anchor for type II membrane protein span at residues 21–41 (IALVVFVGGTLVLGTILFLVS). The Extracellular portion of the chain corresponds to 42–641 (QGLLSLQAKQ…LNVKGKRTLG (600 aa)). Residues 53 to 749 (YCLKPECIEA…NRGMDSCRLW (697 aa)) form the Peptidase M13 domain. C54 and C59 form a disulfide bridge. N-linked (GlcNAc...) asparagine glycosylation is found at N71, N238, N263, N290, N301, N377, and N484. 4 disulfide bridges follow: C77-C733, C85-C693, C142-C406, and C617-C746. Zn(2+) is bound at residue H580. E581 is a catalytic residue. Zn(2+)-binding residues include H584 and E642. D646 acts as the Proton donor in catalysis. An N-linked (GlcNAc...) asparagine glycan is attached at N736.

Belongs to the peptidase M13 family. In terms of assembly, interacts with MEPE; the interaction is zinc-dependent (via ASARM motif). Zn(2+) serves as cofactor. In terms of tissue distribution, specifically expressed in ovary. Expressed at low levels in kidney.

Its subcellular location is the cell membrane. Peptidase that cleaves SIBLING (small integrin-binding ligand, N-linked glycoprotein)-derived ASARM peptides, thus regulating their biological activity. Cleaves ASARM peptides between Ser and Glu or Asp residues. Regulates osteogenic cell differentiation and bone mineralization through the cleavage of the MEPE-derived ASARM peptide. Promotes dentin mineralization and renal phosphate reabsorption by cleaving DMP1- and MEPE-derived ASARM peptides. Inhibits the cleavage of MEPE by CTSB/cathepsin B thus preventing MEPE degradation. The sequence is that of Phosphate-regulating neutral endopeptidase PHEX (PHEX) from Homo sapiens (Human).